Reading from the N-terminus, the 348-residue chain is Phenylalanine--tRNA ligase alpha subunit (348 aa).

Glutamate 259 contributes to the Mg(2+) binding site.

The protein belongs to the class-II aminoacyl-tRNA synthetase family. Phe-tRNA synthetase alpha subunit type 1 subfamily. As to quaternary structure, tetramer of two alpha and two beta subunits. Requires Mg(2+) as cofactor.

Its subcellular location is the cytoplasm. The catalysed reaction is tRNA(Phe) + L-phenylalanine + ATP = L-phenylalanyl-tRNA(Phe) + AMP + diphosphate + H(+). This chain is Phenylalanine--tRNA ligase alpha subunit, found in Lacticaseibacillus paracasei (strain ATCC 334 / BCRC 17002 / CCUG 31169 / CIP 107868 / KCTC 3260 / NRRL B-441) (Lactobacillus paracasei).